The chain runs to 85 residues: UPF0291 protein SpyM3_1470 (85 aa).

Residues 62-85 (TPEKLRQVQREKGLHGRSLDDPKS) are disordered.

The protein belongs to the UPF0291 family.

The protein resides in the cytoplasm. This is UPF0291 protein SpyM3_1470 from Streptococcus pyogenes serotype M3 (strain ATCC BAA-595 / MGAS315).